An 84-amino-acid chain; its full sequence is Large ribosomal subunit protein bL27 (84 aa).

Positions 1–21 (MAHKKGVGSSRNGRDSDGQRL) are disordered.

The protein belongs to the bacterial ribosomal protein bL27 family.

The chain is Large ribosomal subunit protein bL27 from Trichlorobacter lovleyi (strain ATCC BAA-1151 / DSM 17278 / SZ) (Geobacter lovleyi).